We begin with the raw amino-acid sequence, 374 residues long: Patatin-2-Kuras 1 (374 aa).

The first 11 residues, 1-11 (MILATTGSTCA), serve as a signal peptide directing secretion. The PNPLA domain occupies 20 to 217 (LSIDGGGIKG…TVGDPALLSL (198 aa)). The short motif at 24-29 (GGGIKG) is the GXGXXG element. Positions 63-67 (GTSTG) match the GXSXG motif. Residue Ser-65 is the Nucleophile of the active site. N-linked (GlcNAc...) asparagine glycosylation occurs at Asn-103. Asp-203 serves as the catalytic Proton acceptor. The short motif at 203-205 (DGA) is the DGA/G element. The stretch at 309 to 372 (ENALTGTTTE…DRKKLRANKA (64 aa)) forms a coiled coil.

It belongs to the patatin family. Tuber.

It localises to the vacuole. Functionally, probable lipolytic acyl hydrolase (LAH), an activity which is thought to be involved in the response of tubers to pathogens. The sequence is that of Patatin-2-Kuras 1 (pat2-k1) from Solanum tuberosum (Potato).